Here is a 178-residue protein sequence, read N- to C-terminus: MSRIGYKEIDLPSGVEISQDGNVVTVKGPKGTLSREISPLIKMTIDGNVVKFDRDADTNKLKMLHGTTRANVNNMVEGVVDGYKKVLKLVGVGYRAQLKGNKLILTVGYSNPVEMDKPEDVEINVPDNTTIELSSINKEHLGNFAAEVRAVRSPEPYKGKGIRYENEHIIRKEGKTGK.

It belongs to the universal ribosomal protein uL6 family. As to quaternary structure, part of the 50S ribosomal subunit.

Functionally, this protein binds to the 23S rRNA, and is important in its secondary structure. It is located near the subunit interface in the base of the L7/L12 stalk, and near the tRNA binding site of the peptidyltransferase center. The sequence is that of Large ribosomal subunit protein uL6 from Limosilactobacillus reuteri (strain DSM 20016) (Lactobacillus reuteri).